Reading from the N-terminus, the 226-residue chain is LIM domain-containing protein PLIM2a (226 aa).

LIM zinc-binding domains lie at 8–68 (DKCK…LFKE) and 104–164 (DKCA…LFLE). The disordered stretch occupies residues 173-226 (QAAANHRRSASSGGASPPSDDHKPDDTASIPEAKEDDAAPEAAGEEEPEPVVES). Residues 191–209 (SDDHKPDDTASIPEAKEDD) show a composition bias toward basic and acidic residues. Over residues 210–226 (AAPEAAGEEEPEPVVES) the composition is skewed to acidic residues.

In terms of assembly, interacts with F-actin. Predominantly expressed in flowers, in the tapetum and in pollen grains. Detected in leaves and stems.

The protein localises to the cytoplasm. The protein resides in the cytoskeleton. Its function is as follows. Binds to actin filaments and promotes cross-linking into thick bundles. Has an actin-stabilizing activity. The actin regulatory activities are inhibited by pH &gt; 6.8 but are [Ca(2+)] independent. The sequence is that of LIM domain-containing protein PLIM2a from Arabidopsis thaliana (Mouse-ear cress).